Consider the following 491-residue polypeptide: GTPase Der (491 aa).

EngA-type G domains follow at residues 54-217 (PVLA…PEYS) and 229-402 (RRIA…ESWD). GTP-binding positions include 60–67 (GRPNVGKS), 107–111 (DTGGW), 169–172 (NKVD), 235–242 (GRPNVGKS), 282–286 (DTAGI), and 347–350 (NKWD). The 83-residue stretch at 403-485 (RRIPTGRLNA…PIEVNMRVRE (83 aa)) folds into the KH-like domain.

It belongs to the TRAFAC class TrmE-Era-EngA-EngB-Septin-like GTPase superfamily. EngA (Der) GTPase family. Associates with the 50S ribosomal subunit.

GTPase that plays an essential role in the late steps of ribosome biogenesis. This chain is GTPase Der, found in Paenarthrobacter aurescens (strain TC1).